Here is a 264-residue protein sequence, read N- to C-terminus: S-adenosylmethionine decarboxylase proenzyme (264 aa).

The active-site Schiff-base intermediate with substrate; via pyruvic acid is the S112. S112 carries the pyruvic acid (Ser); by autocatalysis modification. H117 acts as the Proton acceptor; for processing activity in catalysis. C140 functions as the Proton donor; for catalytic activity in the catalytic mechanism.

Belongs to the prokaryotic AdoMetDC family. Type 2 subfamily. As to quaternary structure, heterooctamer of four alpha and four beta chains arranged as a tetramer of alpha/beta heterodimers. Pyruvate is required as a cofactor. Post-translationally, is synthesized initially as an inactive proenzyme. Formation of the active enzyme involves a self-maturation process in which the active site pyruvoyl group is generated from an internal serine residue via an autocatalytic post-translational modification. Two non-identical subunits are generated from the proenzyme in this reaction, and the pyruvate is formed at the N-terminus of the alpha chain, which is derived from the carboxyl end of the proenzyme. The post-translation cleavage follows an unusual pathway, termed non-hydrolytic serinolysis, in which the side chain hydroxyl group of the serine supplies its oxygen atom to form the C-terminus of the beta chain, while the remainder of the serine residue undergoes an oxidative deamination to produce ammonia and the pyruvoyl group blocking the N-terminus of the alpha chain.

The catalysed reaction is S-adenosyl-L-methionine + H(+) = S-adenosyl 3-(methylsulfanyl)propylamine + CO2. It participates in amine and polyamine biosynthesis; S-adenosylmethioninamine biosynthesis; S-adenosylmethioninamine from S-adenosyl-L-methionine: step 1/1. Catalyzes the decarboxylation of S-adenosylmethionine to S-adenosylmethioninamine (dcAdoMet), the propylamine donor required for the synthesis of the polyamines spermine and spermidine from the diamine putrescine. This is S-adenosylmethionine decarboxylase proenzyme from Salmonella arizonae (strain ATCC BAA-731 / CDC346-86 / RSK2980).